The primary structure comprises 386 residues: Probable copper-dependent oxygenase M1 (386 aa).

The signal sequence occupies residues 1–22 (MLRMKKICTAFLTIALCTHVLA). A glycan (N-linked (GlcNAc...) asparagine) is linked at Asn86. A helical membrane pass occupies residues 334–354 (FVVPIAAIAFIALTIGAGYVF).

The protein belongs to the clz3 oxygenase family.

It is found in the membrane. It participates in secondary metabolite biosynthesis. Its function is as follows. Probable copper-dependent oxygenase; part of the gene cluster that mediates the biosynthesis of squalestatin S1 (SQS1, also known as zaragozic acid A), a heavily oxidized fungal polyketide that offers potent cholesterol lowering activity by targeting squalene synthase (SS). SQS1 is composed of a 2,8-dioxobicyclic[3.2.1]octane-3,4,5-tricarboxyclic acid core that is connected to two lipophilic polyketide arms. These initial steps feature the priming of an unusual benzoic acid starter unit onto the highly reducing polyketide synthase pks2, followed by oxaloacetate extension and product release to generate a tricarboxylic acid containing product. The phenylalanine ammonia lyase (PAL) M7 and the acyl-CoA ligase M9 are involved in transforming phenylalanine into benzoyl-CoA. The citrate synthase-like protein R3 is involved in connecting the C-alpha-carbons of the hexaketide chain and oxaloacetate to afford the tricarboxylic acid unit. The potential hydrolytic enzymes, M8 and M10, are in close proximity to pks2 and may participate in product release. On the other side, the tetraketide arm is synthesized by a the squalestatin tetraketide synthase pks1 and enzymatically esterified to the core in the last biosynthetic step, by the acetyltransferase M4. The biosynthesis of the tetraketide must involve 3 rounds of chain extension. After the first and second rounds methyl-transfer occurs, and in all rounds of extension the ketoreductase and dehydratase are active. The enoyl reductase and C-MeT of pks1 are not active in the final round of extension. The acetyltransferase M4 appears to have a broad substrate selectivity for its acyl CoA substrate, allowing the in vitro synthesis of novel squalestatins. The biosynthesis of SQS1 requires several oxidative steps likely performed by oxidoreductases M1, R1 and R2. Finally, in support of the identification of the cluster as being responsible for SQS1 production, the cluster contains a gene encoding a putative squalene synthase (SS) R6, suggesting a likely mechanism for self-resistance. The chain is Probable copper-dependent oxygenase M1 from Phoma sp. (strain ATCC 20986 / MF5453).